A 568-amino-acid polypeptide reads, in one-letter code: Urease subunit alpha (568 aa).

The Urease domain maps to 130 to 568 (GGIDTHIHFI…LPMAQRYFLF (439 aa)). Ni(2+) contacts are provided by H135, H137, and K218. The residue at position 218 (K218) is an N6-carboxylysine. H220 provides a ligand contact to substrate. Residues H247 and H273 each contribute to the Ni(2+) site. The active-site Proton donor is H321. D361 contacts Ni(2+).

This sequence belongs to the metallo-dependent hydrolases superfamily. Urease alpha subunit family. As to quaternary structure, heterotrimer of UreA (gamma), UreB (beta) and UreC (alpha) subunits. Three heterotrimers associate to form the active enzyme. The cofactor is Ni cation. Post-translationally, carboxylation allows a single lysine to coordinate two nickel ions.

It localises to the cytoplasm. It carries out the reaction urea + 2 H2O + H(+) = hydrogencarbonate + 2 NH4(+). It functions in the pathway nitrogen metabolism; urea degradation; CO(2) and NH(3) from urea (urease route): step 1/1. This is Urease subunit alpha from Burkholderia cenocepacia (strain ATCC BAA-245 / DSM 16553 / LMG 16656 / NCTC 13227 / J2315 / CF5610) (Burkholderia cepacia (strain J2315)).